The sequence spans 142 residues: Pro-vaccinia growth factor (142 aa).

Residues 1–18 (MSMKYLMLLFAAMIIRSF) form the signal peptide. Over 19 to 100 (ADSGNAIETT…SENPNTTTSY (82 aa)) the chain is Extracellular. A glycan (N-linked (GlcNAc...) asparagine; by host) is linked at Asn-34. An EGF-like domain is found at 41-81 (AIRLCGPEGDGYCLHGDCIHARDIDGMYCRCSHGYTGIRCQ). 3 disulfides stabilise this stretch: Cys-45-Cys-58, Cys-53-Cys-69, and Cys-71-Cys-80. N-linked (GlcNAc...) asparagine; by host glycosylation is present at Asn-95. The chain crosses the membrane as a helical span at residues 101–121 (IPSPGIMLVLVGIIIIITCCL). Topologically, residues 122–142 (LSVYRFTRRTNKLPLQDMVVP) are cytoplasmic.

This sequence belongs to the orthopoxvirus OPG019 family. In terms of assembly, vaccinia growth factor interacts with host EGFR and promotes EGFR dimerization.

The protein localises to the host membrane. It is found in the secreted. Functionally, stimulates cellular proliferation (hyperplasia)and mobility around infected cells to promote rapid and efficient spread of infection. This effect is beneficial for virus replication in vivo, because poxviruses replicate possibly better in proliferating cells than in quiescent cells. Acts by binding host EGFR, inducing its dimerization, autophosphorylation and leading to activation of several cellular pathways regulating cell proliferation or cell survival. The activation by host EGFR of mitogen activated protein kinases (MAPK) and extracellular-signal regulated kinases (ERK) are essential for the positive effect of vaccinia growth factor on poxvirus virulence in vivo. The sequence is that of Pro-vaccinia growth factor (OPG019) from Vaccinia virus (strain Copenhagen) (VACV).